The sequence spans 87 residues: Small ribosomal subunit protein bS20 (87 aa).

The tract at residues 1–26 is disordered; sequence MANIKSAKKRAVQSEKARKHNASRRS.

Belongs to the bacterial ribosomal protein bS20 family.

Functionally, binds directly to 16S ribosomal RNA. The polypeptide is Small ribosomal subunit protein bS20 (Salmonella typhi).